Consider the following 1064-residue polypeptide: Adenylate cyclase type 4 (1064 aa).

The Cytoplasmic segment spans residues 1-28; sequence MARLFSPRPPPSEDLFYETYYSLSQQYP. 6 helical membrane passes run 29–50, 61–80, 94–117, 120–138, 141–162, and 170–190; these read LLIL…VAWA, FLTT…GLAS, GLIW…VSAW, VSFF…PLGM, AAAA…YLGW, and LLPQ…VGAY. Over 191-582 the chain is Cytoplasmic; sequence HKALMERALR…YRLSALPAFK (392 aa). Positions 278, 279, and 322 each coordinate Mg(2+). Residues 278–283, 320–322, and arginine 366 each bind ATP; these read DIVGFT and LGD. The tract at residues 498 to 523 is disordered; that stretch reads DSPASTSTPLPEKAFSPQWSLDRSRT. Serine 517 is modified (phosphoserine). Position 533 is a phosphothreonine (threonine 533). The next 3 membrane-spanning stretches (helical) occupy residues 583 to 604, 608 to 630, and 661 to 684; these read YYAA…LVTT, ALAT…CFSE, and VALG…FLPV. Residues 685–707 lie on the Extracellular side of the membrane; it reads SSDCPFLAPNVSSVAFNTSWELP. 2 N-linked (GlcNAc...) asparagine glycosylation sites follow: asparagine 694 and asparagine 701. 3 helical membrane-spanning segments follow: residues 708-733, 741-761, and 788-804; these read ASLP…SLFL, LLLL…SHAW, and MGAI…LVLA. The Cytoplasmic portion of the chain corresponds to 805–1064; sequence RQNEYYCRLD…LTRTGSPSAS (260 aa). Residues lysine 914, 994–996, 1001–1005, and lysine 1041 each bind ATP; these read DIW and NVASR.

This sequence belongs to the adenylyl cyclase class-4/guanylyl cyclase family. Mg(2+) is required as a cofactor. The cofactor is Mn(2+). As to expression, widely distributed.

It is found in the cell membrane. It localises to the cytoplasm. The catalysed reaction is ATP = 3',5'-cyclic AMP + diphosphate. Its activity is regulated as follows. Activated by forskolin. Insensitive to calcium/calmodulin. Stimulated by GNAS and by the G-protein beta and gamma subunit complex. Functionally, catalyzes the formation of the signaling molecule cAMP in response to G-protein signaling. In Rattus norvegicus (Rat), this protein is Adenylate cyclase type 4 (Adcy4).